A 94-amino-acid chain; its full sequence is Co-chaperonin GroES (94 aa).

It belongs to the GroES chaperonin family. In terms of assembly, heptamer of 7 subunits arranged in a ring. Interacts with the chaperonin GroEL.

It localises to the cytoplasm. In terms of biological role, together with the chaperonin GroEL, plays an essential role in assisting protein folding. The GroEL-GroES system forms a nano-cage that allows encapsulation of the non-native substrate proteins and provides a physical environment optimized to promote and accelerate protein folding. GroES binds to the apical surface of the GroEL ring, thereby capping the opening of the GroEL channel. The protein is Co-chaperonin GroES of Clostridium botulinum.